The following is a 245-amino-acid chain: tRNA (guanine-N(1)-)-methyltransferase (245 aa).

S-adenosyl-L-methionine-binding positions include G111 and M131–L136.

It belongs to the RNA methyltransferase TrmD family. Homodimer.

It localises to the cytoplasm. The catalysed reaction is guanosine(37) in tRNA + S-adenosyl-L-methionine = N(1)-methylguanosine(37) in tRNA + S-adenosyl-L-homocysteine + H(+). Its function is as follows. Specifically methylates guanosine-37 in various tRNAs. This chain is tRNA (guanine-N(1)-)-methyltransferase, found in Staphylococcus epidermidis (strain ATCC 35984 / DSM 28319 / BCRC 17069 / CCUG 31568 / BM 3577 / RP62A).